The primary structure comprises 66 residues: UPF0150 protein AF_0072.1 (66 aa).

This sequence belongs to the UPF0150 family.

This chain is UPF0150 protein AF_0072.1, found in Archaeoglobus fulgidus (strain ATCC 49558 / DSM 4304 / JCM 9628 / NBRC 100126 / VC-16).